The primary structure comprises 609 residues: Glutamine--fructose-6-phosphate aminotransferase [isomerizing] (609 aa).

The active-site Nucleophile; for GATase activity is the C2. One can recognise a Glutamine amidotransferase type-2 domain in the interval 2–218 (CGIVGAVAQR…EGDIAEVTRR (217 aa)). SIS domains are found at residues 286 to 426 (AAKL…LKGV) and 458 to 599 (LAED…VDQP). K604 serves as the catalytic For Fru-6P isomerization activity.

In terms of assembly, homodimer.

It localises to the cytoplasm. The catalysed reaction is D-fructose 6-phosphate + L-glutamine = D-glucosamine 6-phosphate + L-glutamate. Functionally, catalyzes the first step in hexosamine metabolism, converting fructose-6P into glucosamine-6P using glutamine as a nitrogen source. In Photorhabdus laumondii subsp. laumondii (strain DSM 15139 / CIP 105565 / TT01) (Photorhabdus luminescens subsp. laumondii), this protein is Glutamine--fructose-6-phosphate aminotransferase [isomerizing].